A 489-amino-acid polypeptide reads, in one-letter code: GTPase Der (489 aa).

2 EngA-type G domains span residues 3-166 (PVIA…PKDE) and 195-368 (IKIA…KSAV). GTP contacts are provided by residues 9–16 (GRPNVGKS), 56–60 (DTGGI), 118–121 (NKID), 201–208 (GRPNVGKS), 248–252 (DTAGV), and 313–316 (NKWD). The 85-residue stretch at 369 to 453 (TRWPTSRLTQ…PIRIEFKGGE (85 aa)) folds into the KH-like domain. Residues 451–489 (GGENPYEGNKNTLTDRQVNKKRRMMSHHKKADKKRRDKR) form a disordered region. Positions 469–489 (NKKRRMMSHHKKADKKRRDKR) are enriched in basic residues.

The protein belongs to the TRAFAC class TrmE-Era-EngA-EngB-Septin-like GTPase superfamily. EngA (Der) GTPase family. In terms of assembly, associates with the 50S ribosomal subunit.

Functionally, GTPase that plays an essential role in the late steps of ribosome biogenesis. The polypeptide is GTPase Der (Pseudomonas syringae pv. tomato (strain ATCC BAA-871 / DC3000)).